The chain runs to 474 residues: 6-phospho-beta-glucosidase AscB (474 aa).

Residue Glu-180 is the Proton donor of the active site. Glu-372 functions as the Nucleophile in the catalytic mechanism.

This sequence belongs to the glycosyl hydrolase 1 family.

The catalysed reaction is 6-phospho-beta-D-glucosyl-(1-&gt;4)-D-glucose + H2O = D-glucose 6-phosphate + D-glucose. Functionally, can hydrolyze salicin, cellobiose, and probably arbutin. The chain is 6-phospho-beta-glucosidase AscB (ascB) from Escherichia coli (strain K12).